The primary structure comprises 356 residues: Holliday junction branch migration complex subunit RuvB (356 aa).

The segment at 13-201 is large ATPase domain (RuvB-L); it reads SSNLSRKTRL…FGITQRLNFY (189 aa). The tract at residues 15-35 is disordered; the sequence is NLSRKTRLLDPTPSLEEGKVR. Residues leucine 40, arginine 41, glycine 82, lysine 85, threonine 86, threonine 87, 148–150, arginine 191, tyrosine 201, and arginine 238 contribute to the ATP site; that span reads EDF. Threonine 86 provides a ligand contact to Mg(2+). Residues 202-273 are small ATPAse domain (RuvB-S); it reads SISDLNRIIQ…LVDKSLTLHQ (72 aa). The tract at residues 276–356 is head domain (RuvB-H); the sequence is ECGLDQSDRR…NSCKNSPIIK (81 aa). Residues arginine 331 and arginine 336 each coordinate DNA.

Belongs to the RuvB family. Homohexamer. Forms an RuvA(8)-RuvB(12)-Holliday junction (HJ) complex. HJ DNA is sandwiched between 2 RuvA tetramers; dsDNA enters through RuvA and exits via RuvB. An RuvB hexamer assembles on each DNA strand where it exits the tetramer. Each RuvB hexamer is contacted by two RuvA subunits (via domain III) on 2 adjacent RuvB subunits; this complex drives branch migration. In the full resolvosome a probable DNA-RuvA(4)-RuvB(12)-RuvC(2) complex forms which resolves the HJ.

It localises to the cytoplasm. The enzyme catalyses ATP + H2O = ADP + phosphate + H(+). In terms of biological role, the RuvA-RuvB-RuvC complex processes Holliday junction (HJ) DNA during genetic recombination and DNA repair, while the RuvA-RuvB complex plays an important role in the rescue of blocked DNA replication forks via replication fork reversal (RFR). RuvA specifically binds to HJ cruciform DNA, conferring on it an open structure. The RuvB hexamer acts as an ATP-dependent pump, pulling dsDNA into and through the RuvAB complex. RuvB forms 2 homohexamers on either side of HJ DNA bound by 1 or 2 RuvA tetramers; 4 subunits per hexamer contact DNA at a time. Coordinated motions by a converter formed by DNA-disengaged RuvB subunits stimulates ATP hydrolysis and nucleotide exchange. Immobilization of the converter enables RuvB to convert the ATP-contained energy into a lever motion, pulling 2 nucleotides of DNA out of the RuvA tetramer per ATP hydrolyzed, thus driving DNA branch migration. The RuvB motors rotate together with the DNA substrate, which together with the progressing nucleotide cycle form the mechanistic basis for DNA recombination by continuous HJ branch migration. Branch migration allows RuvC to scan DNA until it finds its consensus sequence, where it cleaves and resolves cruciform DNA. The chain is Holliday junction branch migration complex subunit RuvB from Prochlorococcus marinus (strain SARG / CCMP1375 / SS120).